Consider the following 496-residue polypeptide: UDP-N-acetylmuramoylalanine--D-glutamate ligase (496 aa).

130-136 serves as a coordination point for ATP; it reads GTNGKTT.

This sequence belongs to the MurCDEF family. Interacts with PknA. Phosphorylated by PknA.

Its subcellular location is the cytoplasm. The enzyme catalyses UDP-N-acetyl-alpha-D-muramoyl-L-alanine + D-glutamate + ATP = UDP-N-acetyl-alpha-D-muramoyl-L-alanyl-D-glutamate + ADP + phosphate + H(+). Its pathway is cell wall biogenesis; peptidoglycan biosynthesis. Functionally, cell wall formation. Catalyzes the addition of glutamate to the nucleotide precursor UDP-N-acetylmuramoyl-L-alanine (UMA). The chain is UDP-N-acetylmuramoylalanine--D-glutamate ligase from Mycobacterium tuberculosis (strain ATCC 25177 / H37Ra).